We begin with the raw amino-acid sequence, 142 residues long: Large ribosomal subunit protein uL11 (142 aa).

It belongs to the universal ribosomal protein uL11 family. Part of the ribosomal stalk of the 50S ribosomal subunit. Interacts with L10 and the large rRNA to form the base of the stalk. L10 forms an elongated spine to which L12 dimers bind in a sequential fashion forming a multimeric L10(L12)X complex. Post-translationally, one or more lysine residues are methylated.

Its function is as follows. Forms part of the ribosomal stalk which helps the ribosome interact with GTP-bound translation factors. In Pseudoalteromonas atlantica (strain T6c / ATCC BAA-1087), this protein is Large ribosomal subunit protein uL11.